The sequence spans 94 residues: Neutrophil defensin 6 (94 aa).

Residues 1–19 (MRTIAILAAILLFALLAQA) form the signal peptide. Positions 20–61 (KSLQETADEAATQEQPGEDDQDLAVSFEENGLSTLRASGSQA) are excised as a propeptide. 3 disulfides stabilise this stretch: C65/C93, C67/C82, and C72/C92.

This sequence belongs to the alpha-defensin family.

Its subcellular location is the secreted. Functionally, defensins 6 and 7 have bacteriostatic activity against Gram-positive bacteria S.aureus and L.monocytogenes and Gram-negative bacterium E.coli and antifungal activity against C.neoformans. Defensin 7 has microbicidial activity against Gram-positive bacteria S.aureus and L.monocytogenes. The protein is Neutrophil defensin 6 of Macaca mulatta (Rhesus macaque).